The chain runs to 221 residues: Lipoprotein-releasing system ATP-binding protein LolD (221 aa).

An ABC transporter domain is found at 6–220 (LTLKNVSKHY…YKLKHGALNM (215 aa)). 42–49 (GSSGSGKS) contacts ATP.

Belongs to the ABC transporter superfamily. Lipoprotein translocase (TC 3.A.1.125) family. The complex is composed of two ATP-binding proteins (LolD) and two transmembrane proteins (LolC and LolE).

It localises to the cell inner membrane. Functionally, part of the ABC transporter complex LolCDE involved in the translocation of mature outer membrane-directed lipoproteins, from the inner membrane to the periplasmic chaperone, LolA. Responsible for the formation of the LolA-lipoprotein complex in an ATP-dependent manner. This Rickettsia bellii (strain RML369-C) protein is Lipoprotein-releasing system ATP-binding protein LolD.